A 400-amino-acid chain; its full sequence is MAPPNTIDAGLTQRHITTTAAPTSAKPAFERNYQLPEFTIKEIRECIPAHCFERSGLRGLCHVAIDLTWASLLFLAATQIDKFENPLIRYLAWPAYWIMQGIVCTGIWVLAHECGHQSFSTSKTLNNTVGWILHSMLLVPYHSWRISHSKHHKATGHMTKDQVFVPKTRSQVGLPPKESAAAAVQEEDMSVHLDEEAPIVTLFWMVIQFLFGWPAYLIMNASGQDYGRWTSHFHTYSPIFEPRNFFDIIISDLGVLAALGALIYASMQLSLLTVTKYYIIPYLFVNFWLVLITFLQHTDPKLPHYREGAWNFQRGALCTVDRSFGKFLDHMFHGIVHTHVAHHLFSQMPFYHAEEATYHLKKLLGEYYVYDPSPIVVAVWRSFRECRFVEDHGDVVFFKK.

Residues 91–111 (LAWPAYWIMQGIVCTGIWVLA) form a helical membrane-spanning segment. A Histidine box-1 motif is present at residues 112 to 116 (HECGH). The short motif at 148–152 (HSKHH) is the Histidine box-2 element. The next 3 helical transmembrane spans lie at 199 to 219 (IVTL…YLIM), 245 to 265 (FFDI…LIYA), and 277 to 297 (YYII…FLQH). A Histidine box-3 motif is present at residues 339–343 (HVAHH).

This sequence belongs to the fatty acid desaturase type 1 family.

The protein localises to the membrane. The catalysed reaction is (9Z)-octadecenoyl-CoA + 2 Fe(II)-[cytochrome b5] + O2 + 2 H(+) = (9Z,12Z)-octadecadienoyl-CoA + 2 Fe(III)-[cytochrome b5] + 2 H2O. It catalyses the reaction (9Z)-hexadecenoyl-CoA + 2 Fe(II)-[cytochrome b5] + O2 + 2 H(+) = (9Z,12Z)-hexadecadienoyl-CoA + 2 Fe(III)-[cytochrome b5] + 2 H2O. Its pathway is lipid metabolism; polyunsaturated fatty acid biosynthesis. Catalyzes the desaturation of oleic acid (Delta(9)-18:1) to linoleic acid (Delta(9), Delta(12)-18:2). This Mortierella isabellina (Filamentous fungus) protein is Delta(12) fatty acid desaturase.